The sequence spans 174 residues: Shikimate kinase 2 (174 aa).

12–17 (GAGKTT) is an ATP binding site. Mg(2+) is bound by residues T16 and D32. Positions 34, 58, and 79 each coordinate substrate. Residues 112 to 126 (AEDPEEAQRPSLTGK) form an LID domain region. Residue R120 coordinates ATP. R139 contributes to the substrate binding site. Q155 serves as a coordination point for ATP.

It belongs to the shikimate kinase family. AroL subfamily. Monomer. The cofactor is Mg(2+).

It localises to the cytoplasm. It catalyses the reaction shikimate + ATP = 3-phosphoshikimate + ADP + H(+). The protein operates within metabolic intermediate biosynthesis; chorismate biosynthesis; chorismate from D-erythrose 4-phosphate and phosphoenolpyruvate: step 5/7. In terms of biological role, catalyzes the specific phosphorylation of the 3-hydroxyl group of shikimic acid using ATP as a cosubstrate. The protein is Shikimate kinase 2 of Yersinia pestis bv. Antiqua (strain Antiqua).